The sequence spans 157 residues: Dihydrofolate reductase type 6 (157 aa).

The region spanning 2–156 is the DHFR domain; it reads KISLMAAVSE…IDYTYQIWAK (155 aa).

This sequence belongs to the dihydrofolate reductase family. Homodimer.

It carries out the reaction (6S)-5,6,7,8-tetrahydrofolate + NADP(+) = 7,8-dihydrofolate + NADPH + H(+). It participates in cofactor biosynthesis; tetrahydrofolate biosynthesis; 5,6,7,8-tetrahydrofolate from 7,8-dihydrofolate: step 1/1. In terms of biological role, key enzyme in folate metabolism. Catalyzes an essential reaction for de novo glycine and purine synthesis, and for DNA precursor synthesis. The sequence is that of Dihydrofolate reductase type 6 (dhfrVI) from Proteus mirabilis.